A 261-amino-acid chain; its full sequence is Phosphonates import ATP-binding protein PhnC (261 aa).

Residues 8-253 (LRVENLSKTY…WFRRIYGEGA (246 aa)) enclose the ABC transporter domain. ATP is bound at residue 41–48 (GLSGSGKS).

Belongs to the ABC transporter superfamily. Phosphonates importer (TC 3.A.1.9.1) family. In terms of assembly, the complex is composed of two ATP-binding proteins (PhnC), two transmembrane proteins (PhnE) and a solute-binding protein (PhnD).

Its subcellular location is the cell inner membrane. The catalysed reaction is phosphonate(out) + ATP + H2O = phosphonate(in) + ADP + phosphate + H(+). Functionally, part of the ABC transporter complex PhnCDE involved in phosphonates import. Responsible for energy coupling to the transport system. The chain is Phosphonates import ATP-binding protein PhnC from Bdellovibrio bacteriovorus (strain ATCC 15356 / DSM 50701 / NCIMB 9529 / HD100).